Reading from the N-terminus, the 548-residue chain is Sulochrin halogenase gedL (548 aa).

Residues glycine 14, alanine 17, and glutamate 47 each coordinate FAD. Residues serine 333 and glycine 334 each contribute to the chloride site. Residue valine 335 coordinates FAD.

It belongs to the flavin-dependent halogenase family.

It carries out the reaction sulochrin + 2 FADH2 + 2 chloride + 2 O2 = dihydrogeodin + 2 FAD + 4 H2O + H(+). It functions in the pathway secondary metabolite biosynthesis. Functionally, sulochrin halogenase; part of the gene cluster that mediates the biosynthesis of geodin, an intermediate in the biosynthesis of other natural products. The pathway begins with the synthesis of atrochrysone thioester by the polyketide synthase (PKS) gedC. The atrochrysone carboxyl ACP thioesterase gedB then breaks the thioester bond and releases the atrochrysone carboxylic acid from gedC. The atrochrysone carboxylic acid is then converted to atrochrysone which is further transformed into emodinanthrone. The next step is performed by the emodinanthrone oxygenase gedH that catalyzes the oxidation of emodinanthrone to emodin. Emodin O-methyltransferase encoded probably by gedA then catalyzes methylation of the 8-hydroxy group of emodin to form questin. Ring cleavage of questin by questin oxidase gedK leads to desmethylsulochrin via several intermediates including questin epoxide. Another methylation step probably catalyzed by methyltransferase gedG leads to the formation of sulochrin which is further converted to dihydrogeodin by the sulochrin halogenase gedL. Finally, the dihydrogeodin oxidase gedJ catalyzes the stereospecific phenol oxidative coupling reaction converting dihydrogeodin to geodin. The chain is Sulochrin halogenase gedL from Aspergillus terreus (strain NIH 2624 / FGSC A1156).